The sequence spans 727 residues: MAFQKAVKRTVLVCGGALATVLGLSQCSHYRRKQVNLACLKAAGCHTEPVNREPPSREAQLLTLQNTSEFDILVIGGGATGSGCALDAVTRGLKTALVERDDFSSGTSSRSTKLIHGGVRYLQKAIMKLDVEQYRMVKEALHERANLLEIAPHLSAPLPIMLPIYKWWQLPYYWVGIKLYDLVAGSNCLKSSYVLSKSRALEHFPMLQKDKLVGAIVYYDGQHNDARMNLAIALTAARYGAATANYREVVSLLKKTDPETGKERVSGARCKDVLTGLEFDVRAKCVINATGPFTDSVRKMDDNKAPAICQPSAGVHIVMPGYYSPESMGLLDPATSDGRVIFFLPWENMTIAGTTDSPTKNTHHPIPSEEDINFILNEVRNYLSCDVEVRRGDVLAAWSGIRPLVIDPKSADTQSISRNHVVDVSESGLITIAGGKWTTYRSMAEDTVDTAIKVHNLKAGPCRTVGLFLQGGKDWSPTLYIRLVQDYGLESEVAQHLATTYGDKAFEVAKMAKVTGKRWPIVGVRLVSEFPYIEAEVKYGIKEYACTAVDMISRRTRLAFLNIQAAEEALPRIVELMGRELDWSEIRKQAELETATKFLYYEMGSKSRSEQLTDRTEISLRPSDIERYTKRFHKFDADEKGFITIVDVQRVLENINVKIDENTLHEILSEVDLNKNGQVELNEFLQLMSAIQKGRVSGSRLAILMKTAEENLDRRVPIPVDRSCGGL.

The transit peptide at methionine 1–alanine 42 directs the protein to the mitochondrion. Position 71-99 (aspartate 71–glutamate 99) interacts with FAD. Tyrosine 601 is modified (phosphotyrosine). 2 EF-hand domains span residues serine 623–lysine 658 and isoleucine 659–glycine 694. Residues aspartate 672, asparagine 674, asparagine 676, glutamine 678, and glutamate 683 each contribute to the Ca(2+) site.

Belongs to the FAD-dependent glycerol-3-phosphate dehydrogenase family. Requires FAD as cofactor.

The protein localises to the mitochondrion. It carries out the reaction a quinone + sn-glycerol 3-phosphate = dihydroxyacetone phosphate + a quinol. It participates in polyol metabolism; glycerol degradation via glycerol kinase pathway; glycerone phosphate from sn-glycerol 3-phosphate (aerobic route): step 1/1. Its activity is regulated as follows. Calcium-binding enhance the activity of the enzyme. In terms of biological role, calcium-responsive mitochondrial glycerol-3-phosphate dehydrogenase which seems to be a key component of the pancreatic beta-cell glucose-sensing device. The protein is Glycerol-3-phosphate dehydrogenase, mitochondrial (GPD2) of Mesocricetus auratus (Golden hamster).